The primary structure comprises 194 residues: Mediator of RNA polymerase II transcription subunit 8 (194 aa).

It belongs to the Mediator complex subunit 8 family. As to quaternary structure, component of the Mediator complex.

It localises to the nucleus. Component of the Mediator complex, a coactivator involved in the regulated transcription of nearly all RNA polymerase II-dependent genes. Mediator functions as a bridge to convey information from gene-specific regulatory proteins to the basal RNA polymerase II transcription machinery. Mediator is recruited to promoters by direct interactions with regulatory proteins and serves as a scaffold for the assembly of a functional preinitiation complex with RNA polymerase II and the general transcription factors. This Yarrowia lipolytica (strain CLIB 122 / E 150) (Yeast) protein is Mediator of RNA polymerase II transcription subunit 8 (MED8).